Here is a 356-residue protein sequence, read N- to C-terminus: S-adenosylmethionine:tRNA ribosyltransferase-isomerase (356 aa).

The protein belongs to the QueA family. As to quaternary structure, monomer.

The protein localises to the cytoplasm. The enzyme catalyses 7-aminomethyl-7-carbaguanosine(34) in tRNA + S-adenosyl-L-methionine = epoxyqueuosine(34) in tRNA + adenine + L-methionine + 2 H(+). It participates in tRNA modification; tRNA-queuosine biosynthesis. Its function is as follows. Transfers and isomerizes the ribose moiety from AdoMet to the 7-aminomethyl group of 7-deazaguanine (preQ1-tRNA) to give epoxyqueuosine (oQ-tRNA). This Histophilus somni (strain 2336) (Haemophilus somnus) protein is S-adenosylmethionine:tRNA ribosyltransferase-isomerase.